The chain runs to 88 residues: Large ribosomal subunit protein eL37A (88 aa).

Zn(2+)-binding residues include C19, C22, C34, and C37. The C4-type zinc-finger motif lies at 19–37; that stretch reads CNRCGRRSFHVQKKTCSSC.

It belongs to the eukaryotic ribosomal protein eL37 family. Component of the large ribosomal subunit (LSU). Mature yeast ribosomes consist of a small (40S) and a large (60S) subunit. The 40S small subunit contains 1 molecule of ribosomal RNA (18S rRNA) and 33 different proteins (encoded by 57 genes). The large 60S subunit contains 3 rRNA molecules (25S, 5.8S and 5S rRNA) and 46 different proteins (encoded by 81 genes). Requires Zn(2+) as cofactor.

It is found in the cytoplasm. In terms of biological role, component of the ribosome, a large ribonucleoprotein complex responsible for the synthesis of proteins in the cell. The small ribosomal subunit (SSU) binds messenger RNAs (mRNAs) and translates the encoded message by selecting cognate aminoacyl-transfer RNA (tRNA) molecules. The large subunit (LSU) contains the ribosomal catalytic site termed the peptidyl transferase center (PTC), which catalyzes the formation of peptide bonds, thereby polymerizing the amino acids delivered by tRNAs into a polypeptide chain. The nascent polypeptides leave the ribosome through a tunnel in the LSU and interact with protein factors that function in enzymatic processing, targeting, and the membrane insertion of nascent chains at the exit of the ribosomal tunnel. This is Large ribosomal subunit protein eL37A from Saccharomyces cerevisiae (strain ATCC 204508 / S288c) (Baker's yeast).